A 540-amino-acid chain; its full sequence is Lysosomal cobalamin transport escort protein LMBD1 (540 aa).

The Extracellular segment spans residues 1–10; the sequence is MATSGAASAE. Residues 11–31 traverse the membrane as a helical segment; that stretch reads LVIGWCIFGLLLLAILAFCWI. Residues 32 to 50 lie on the Cytoplasmic side of the membrane; the sequence is YVRKYQSRRESEVVSTITA. A helical membrane pass occupies residues 51 to 71; it reads IFSLAIALITSALLPVDIFLV. At 72 to 100 the chain is on the extracellular side; sequence SYMKNQNGTFKDWANANVSRQIEDTVLYG. N-linked (GlcNAc...) asparagine glycosylation is found at N78 and N88. The helical transmembrane segment at 101–121 threads the bilayer; it reads YYTLYSVILFCVFFWIPFVYF. Residues 122–144 lie on the Cytoplasmic side of the membrane; the sequence is YYEEKDDDDTSKCTQIKTALKYT. Residues 145–165 traverse the membrane as a helical segment; that stretch reads LGFVVICALLLLVGAFVPLNV. Topologically, residues 166 to 188 are extracellular; sequence PNNKNSTEWEKVKSLFEELGSSH. N-linked (GlcNAc...) asparagine glycosylation occurs at N170. Residues 189–209 form a helical membrane-spanning segment; sequence GLAALSFSISSLTLIGMLAAI. Residues 210 to 305 lie on the Cytoplasmic side of the membrane; that stretch reads TYTAYGMSAL…KFCGALRPLK (96 aa). Positions 232-235 match the YERL motif; mediates interaction with adapter protein complex 2 and is essential for its function in clathrin-mediated endocytosis of INSR motif; it reads YERL. Phosphothreonine is present on T238. The short motif at 294–297 is the WTKF motif; mediates interaction with adapter protein complex 2 and is essential for its function in clathrin-mediated endocytosis of INSR element; sequence WTKF. The chain crosses the membrane as a helical span at residues 306-326; the sequence is IVWGIFFILVALLFVISLFLS. The Extracellular segment spans residues 327–364; it reads NLDKALHSAGIDSGFIIFGANLSNPLNMLLPLLQTVFP. N347 is a glycosylation site (N-linked (GlcNAc...) asparagine). Residues 365–385 traverse the membrane as a helical segment; that stretch reads LDYILITIIIMYFIFTSMAGI. The Cytoplasmic segment spans residues 386 to 408; the sequence is RNIGIWFFWIRLYKIRRGRTRPQ. A helical membrane pass occupies residues 409–429; the sequence is ALLFLCMILLLIVLHTSYMIY. Over 430-486 the chain is Extracellular; sequence SLAPQYVMYGSQNYLIETNITSDNHKGNSTLSVPKRCDADAPEDQCTVTRTYLFLHK. Residues N448 and N457 are each glycosylated (N-linked (GlcNAc...) asparagine). The chain crosses the membrane as a helical span at residues 487–507; sequence FWFFSAAYYFGNWAFLGVFLI. At 508–540 the chain is on the cytoplasmic side; that stretch reads GLIVSCCKGKKSVIEGVDEDSDISDDEPSVYSA. Phosphoserine occurs at positions 528 and 531.

It belongs to the LIMR family. LMBRD1 subfamily. As to quaternary structure, (Microbial infection) Interacts with hepatitis delta virus NES (HDAg-L). In terms of assembly, interacts with ABCD4; this interaction induces the translocation of ABCD4 from the endoplasmic reticulum to the lysosome. Interacts with ABCD4 and MMACHC; this interaction ensures the transport of cobalamin from the lysosome to the cytoplasm. Interacts with INSR, adapter protein complex 2 and clathrin heavy chain. Post-translationally, N-glycosylated. Isoform 3 is expressed in liver.

The protein resides in the endoplasmic reticulum membrane. It localises to the lysosome membrane. Its subcellular location is the cell membrane. It is found in the cytoplasmic vesicle. The protein localises to the clathrin-coated vesicle. Its function is as follows. Lysosomal membrane chaperone required to export cobalamin (vitamin B12) from the lysosome to the cytosol, allowing its conversion to cofactors. Targets ABCD4 transporter from the endoplasmic reticulum to the lysosome. Then forms a complex with lysosomal ABCD4 and cytoplasmic MMACHC to transport cobalamin across the lysosomal membrane. Acts as an adapter protein which plays an important role in mediating and regulating the internalization of the insulin receptor (INSR). Involved in clathrin-mediated endocytosis of INSR via its interaction with adapter protein complex 2. Essential for the initiation of gastrulation and early formation of mesoderm structures during embryogenesis. In terms of biological role, (Microbial infection) May play a role in the assembly of hepatitis delta virus (HDV). This chain is Lysosomal cobalamin transport escort protein LMBD1, found in Homo sapiens (Human).